The sequence spans 143 residues: Large ribosomal subunit protein uL11 (143 aa).

The protein belongs to the universal ribosomal protein uL11 family. As to quaternary structure, part of the ribosomal stalk of the 50S ribosomal subunit. Interacts with L10 and the large rRNA to form the base of the stalk. L10 forms an elongated spine to which L12 dimers bind in a sequential fashion forming a multimeric L10(L12)X complex. Post-translationally, one or more lysine residues are methylated.

Its function is as follows. Forms part of the ribosomal stalk which helps the ribosome interact with GTP-bound translation factors. The polypeptide is Large ribosomal subunit protein uL11 (Borrelia garinii subsp. bavariensis (strain ATCC BAA-2496 / DSM 23469 / PBi) (Borreliella bavariensis)).